A 247-amino-acid chain; its full sequence is Ribonuclease PH (247 aa).

Phosphate is bound by residues arginine 87 and 125–127 (GTR).

Belongs to the RNase PH family. Homohexameric ring arranged as a trimer of dimers.

It catalyses the reaction tRNA(n+1) + phosphate = tRNA(n) + a ribonucleoside 5'-diphosphate. In terms of biological role, phosphorolytic 3'-5' exoribonuclease that plays an important role in tRNA 3'-end maturation. Removes nucleotide residues following the 3'-CCA terminus of tRNAs; can also add nucleotides to the ends of RNA molecules by using nucleoside diphosphates as substrates, but this may not be physiologically important. Probably plays a role in initiation of 16S rRNA degradation (leading to ribosome degradation) during starvation. This Trichormus variabilis (strain ATCC 29413 / PCC 7937) (Anabaena variabilis) protein is Ribonuclease PH.